A 325-amino-acid chain; its full sequence is Acetyl-coenzyme A carboxylase carboxyl transferase subunit beta (325 aa).

The 270-residue stretch at 24–293 (LWIKCPDSGH…AEIEVVTPEP (270 aa)) folds into the CoA carboxyltransferase N-terminal domain.

Belongs to the AccD/PCCB family. As to quaternary structure, acetyl-CoA carboxylase is a heterohexamer composed of biotin carboxyl carrier protein (AccB), biotin carboxylase (AccC) and two subunits each of ACCase subunit alpha (AccA) and ACCase subunit beta (AccD).

The protein resides in the cytoplasm. The enzyme catalyses N(6)-carboxybiotinyl-L-lysyl-[protein] + acetyl-CoA = N(6)-biotinyl-L-lysyl-[protein] + malonyl-CoA. It functions in the pathway lipid metabolism; malonyl-CoA biosynthesis; malonyl-CoA from acetyl-CoA: step 1/1. Functionally, component of the acetyl coenzyme A carboxylase (ACC) complex. Biotin carboxylase (BC) catalyzes the carboxylation of biotin on its carrier protein (BCCP) and then the CO(2) group is transferred by the transcarboxylase to acetyl-CoA to form malonyl-CoA. The sequence is that of Acetyl-coenzyme A carboxylase carboxyl transferase subunit beta from Rhodopseudomonas palustris (strain BisA53).